Reading from the N-terminus, the 295-residue chain is UDP-N-acetylenolpyruvoylglucosamine reductase (295 aa).

An FAD-binding PCMH-type domain is found at 23 to 188 (QVGGPADFLA…ISAKFALKPG (166 aa)). R167 is a catalytic residue. Catalysis depends on S217, which acts as the Proton donor. Residue E287 is part of the active site.

The protein belongs to the MurB family. Requires FAD as cofactor.

The protein localises to the cytoplasm. It catalyses the reaction UDP-N-acetyl-alpha-D-muramate + NADP(+) = UDP-N-acetyl-3-O-(1-carboxyvinyl)-alpha-D-glucosamine + NADPH + H(+). It participates in cell wall biogenesis; peptidoglycan biosynthesis. Functionally, cell wall formation. The polypeptide is UDP-N-acetylenolpyruvoylglucosamine reductase (Streptococcus equi subsp. zooepidemicus (strain H70)).